The chain runs to 166 residues: Regulator of ribonuclease activity A (166 aa).

This sequence belongs to the RraA family. In terms of assembly, homotrimer. Binds to both RNA-binding sites in the C-terminal region of Rne and to RhlB.

It is found in the cytoplasm. Globally modulates RNA abundance by binding to RNase E (Rne) and regulating its endonucleolytic activity. Can modulate Rne action in a substrate-dependent manner by altering the composition of the degradosome. Modulates RNA-binding and helicase activities of the degradosome. The chain is Regulator of ribonuclease activity A from Histophilus somni (strain 2336) (Haemophilus somnus).